We begin with the raw amino-acid sequence, 881 residues long: Low-affinity phosphate transporter PHO90 (881 aa).

The region spanning 1–288 (MRFSHFLKYN…HLNTRTELIE (288 aa)) is the SPX domain. The next 12 membrane-spanning stretches (helical) occupy residues 417–437 (IYFI…NDAA), 456–476 (AIPL…FKVL), 493–513 (ILAA…TLGE), 514–534 (VLAQ…FAGC), 539–559 (VLLM…NVAA), 581–601 (AQAL…SSPI), 663–683 (FTVK…LWCV), 691–711 (FGSS…TGLL), 718–738 (AFPW…KAVS), 758–778 (GVFA…TFVS), 805–825 (ILVF…SSGF), and 854–874 (ASIL…ASVV).

This sequence belongs to the CitM (TC 2.A.11) transporter family.

Its subcellular location is the membrane. Low-affinity phosphate transporter involved in the control of cellular phosphate levels. This Saccharomyces cerevisiae (strain ATCC 204508 / S288c) (Baker's yeast) protein is Low-affinity phosphate transporter PHO90 (PHO90).